Reading from the N-terminus, the 526-residue chain is Tyrosine-protein kinase transforming protein Src (526 aa).

The span at 1 to 15 shows a compositional bias: basic residues; sequence MGSSKSKPKGPSQRR. The disordered stretch occupies residues 1-59; that stretch reads MGSSKSKPKGPSQRRRSLEPPDSTHHGGFPASQTPNKTAAPDTHRTPSRSFGTVATEPK. Gly-2 carries the N-myristoyl glycine; by host lipid modification. A compositionally biased stretch (basic and acidic residues) spans 16 to 25; sequence RSLEPPDSTH. Residues 81–142 enclose the SH3 domain; the sequence is GGVTTFVALY…PSNYVAPSDS (62 aa). One can recognise an SH2 domain in the interval 148-245; it reads WYFGKITRRE…GLCHRLTNVC (98 aa). In terms of domain architecture, Protein kinase spans 267-517; it reads LRLEVKLGQG…TFEYLQAQLL (251 aa). Residues 273 to 281 and Lys-295 contribute to the ATP site; that span reads LGQGCFGEV. The active-site Proton acceptor is the Asp-386. Tyr-416 carries the phosphotyrosine; by autocatalysis modification.

This sequence belongs to the protein kinase superfamily. Tyr protein kinase family. SRC subfamily. As to quaternary structure, homodimer. In terms of processing, the phosphorylated form is termed pp60v-src.

The enzyme catalyses L-tyrosyl-[protein] + ATP = O-phospho-L-tyrosyl-[protein] + ADP + H(+). Functionally, this phosphoprotein, required for both the initiation and the maintenance of neoplastic transformation, is a protein kinase that catalyzes the phosphorylation of tyrosine residues in vitro. This is Tyrosine-protein kinase transforming protein Src (V-SRC) from Rous sarcoma virus subgroup E (strain Schmidt-Ruppin) (RSV-SR-E).